Reading from the N-terminus, the 588-residue chain is L-fucose isomerase (588 aa).

Catalysis depends on proton acceptor residues glutamate 335 and aspartate 359. Mn(2+) is bound by residues glutamate 335, aspartate 359, and histidine 525.

It belongs to the L-fucose isomerase family. Mn(2+) is required as a cofactor.

Its subcellular location is the cytoplasm. The catalysed reaction is L-fucose = L-fuculose. It functions in the pathway carbohydrate degradation; L-fucose degradation; L-lactaldehyde and glycerone phosphate from L-fucose: step 1/3. Functionally, converts the aldose L-fucose into the corresponding ketose L-fuculose. This Streptococcus pneumoniae serotype 2 (strain D39 / NCTC 7466) protein is L-fucose isomerase.